A 373-amino-acid chain; its full sequence is MSMRVGILTSGGDSPGLNAAIRGFGKAAVSTYGMELIGFRDGMRGLAENRFMQLDSHALSGILTTGGTILGTSRDKVHKMLVDGKVQNMIPVIKKNYEKNKLDALVCLGGGGTAKNAKRLSDAGMNVITLPKTIDNDLVGTDQTFGFATALEIATDAVDRLHSTAHSHHRIILTEIMGHRAGWLALGAGIAGGADVILLPEVPYNVESIAAAISRRSAHGSNFSVVAVAEGARNERDAAELAAADALVREADSPVARDAAKTHRANVEASHRAHTFTLATELEKATGLESRVTILGYVQRGGTPCGRDRVLATVLGTAGADLVAKGVFGVMVAAKGDGAEPVPLEEVAGKIRRVPVDHPWIRAAKEVGTGFGD.

ATP is bound by residues glycine 12, 74–75, and 110–113; these read RD and GGGT. Residues 133–135, arginine 170, 177–179, glutamate 230, arginine 291, and 297–300 each bind substrate; these read TID, MGH, and YVQR. Aspartate 135 (proton acceptor) is an active-site residue.

It belongs to the phosphofructokinase type A (PFKA) family. Mixed-substrate PFK group III subfamily. Homodimer or homotetramer. Mg(2+) serves as cofactor.

The protein localises to the cytoplasm. The enzyme catalyses beta-D-fructose 6-phosphate + ATP = beta-D-fructose 1,6-bisphosphate + ADP + H(+). It functions in the pathway carbohydrate degradation; glycolysis; D-glyceraldehyde 3-phosphate and glycerone phosphate from D-glucose: step 3/4. Its function is as follows. Catalyzes the phosphorylation of D-fructose 6-phosphate to fructose 1,6-bisphosphate by ATP, the first committing step of glycolysis. This Propionibacterium freudenreichii subsp. shermanii (strain ATCC 9614 / DSM 4902 / CIP 103027 / NCIMB 8099 / CIRM-BIA1) protein is ATP-dependent 6-phosphofructokinase.